Reading from the N-terminus, the 401-residue chain is Mitochondrial distribution and morphology protein 12 (401 aa).

The region spanning M1–V401 is the SMP-LTD domain. Residues Y70–G88 are compositionally biased toward acidic residues. Disordered regions lie at residues Y70–N95 and S190–P247. Residues P195–P205 show a composition bias toward low complexity. Positions H209–A220 are enriched in basic and acidic residues.

It belongs to the MDM12 family. Component of the ER-mitochondria encounter structure (ERMES) or MDM complex, composed of MMM1, MDM10, MDM12 and MDM34. An MMM1 homodimer associates with one molecule of MDM12 on each side in a pairwise head-to-tail manner, and the SMP-LTD domains of MMM1 and MDM12 generate a continuous hydrophobic tunnel for phospholipid trafficking.

It is found in the mitochondrion outer membrane. The protein resides in the endoplasmic reticulum membrane. In terms of biological role, component of the ERMES/MDM complex, which serves as a molecular tether to connect the endoplasmic reticulum (ER) and mitochondria. Components of this complex are involved in the control of mitochondrial shape and protein biogenesis, and function in nonvesicular lipid trafficking between the ER and mitochondria. MDM12 is required for the interaction of the ER-resident membrane protein MMM1 and the outer mitochondrial membrane-resident beta-barrel protein MDM10. The MDM12-MMM1 subcomplex functions in the major beta-barrel assembly pathway that is responsible for biogenesis of all mitochondrial outer membrane beta-barrel proteins, and acts in a late step after the SAM complex. The MDM10-MDM12-MMM1 subcomplex further acts in the TOM40-specific pathway after the action of the MDM12-MMM1 complex. Essential for establishing and maintaining the structure of mitochondria and maintenance of mtDNA nucleoids. The chain is Mitochondrial distribution and morphology protein 12 from Phaeosphaeria nodorum (strain SN15 / ATCC MYA-4574 / FGSC 10173) (Glume blotch fungus).